Consider the following 216-residue polypeptide: Transmembrane emp24 domain-containing protein eca (216 aa).

An N-terminal signal peptide occupies residues 1–20 (MRDQFISLALILCVLHSACG). Residues 21 to 182 (LYFHISETER…FRHTSESTNS (162 aa)) are Lumenal-facing. A GOLD domain is found at 30 to 126 (RKCFIEEVPD…QLRVHLDIQV (97 aa)). Residues 134 to 164 (ANVAQKEKLTELQLRIRQLLDQVEQITKEQN) are a coiled coil. The helical transmembrane segment at 183–203 (RVLWWSLAQTIVLVCMGFWQM) threads the bilayer. Residues 204-216 (RHLKSFFEAKKLV) are Cytoplasmic-facing. The Prevents secretion from ER motif lies at 213–216 (KKLV).

This sequence belongs to the EMP24/GP25L family.

It is found in the endoplasmic reticulum membrane. In terms of biological role, eca and bai are essential, though not redundant, for dorsoventral patterning of the embryo. Specifically required during early embryogenesis for the activity of maternal tkv, while the zygotic tkv is not affected. Involved in Golgi organization. The protein is Transmembrane emp24 domain-containing protein eca of Drosophila sechellia (Fruit fly).